The primary structure comprises 336 residues: Coproporphyrin III ferrochelatase (336 aa).

Residues serine 52 and tyrosine 116 each coordinate Fe-coproporphyrin III. Fe(2+) is bound by residues histidine 176 and glutamate 259.

The protein belongs to the ferrochelatase family.

Its subcellular location is the cytoplasm. The catalysed reaction is Fe-coproporphyrin III + 2 H(+) = coproporphyrin III + Fe(2+). It functions in the pathway porphyrin-containing compound metabolism; protoheme biosynthesis. Its function is as follows. Involved in coproporphyrin-dependent heme b biosynthesis. Catalyzes the insertion of ferrous iron into coproporphyrin III to form Fe-coproporphyrin III. The protein is Coproporphyrin III ferrochelatase of Mycobacterium leprae (strain Br4923).